The sequence spans 300 residues: 4-diphosphocytidyl-2-C-methyl-D-erythritol kinase (300 aa).

Lys-12 is an active-site residue. ATP is bound at residue 94 to 104; it reads PAQAGIGGGSS. Residue Asp-136 is part of the active site.

Belongs to the GHMP kinase family. IspE subfamily.

The enzyme catalyses 4-CDP-2-C-methyl-D-erythritol + ATP = 4-CDP-2-C-methyl-D-erythritol 2-phosphate + ADP + H(+). Its pathway is isoprenoid biosynthesis; isopentenyl diphosphate biosynthesis via DXP pathway; isopentenyl diphosphate from 1-deoxy-D-xylulose 5-phosphate: step 3/6. In terms of biological role, catalyzes the phosphorylation of the position 2 hydroxy group of 4-diphosphocytidyl-2C-methyl-D-erythritol. In Verminephrobacter eiseniae (strain EF01-2), this protein is 4-diphosphocytidyl-2-C-methyl-D-erythritol kinase.